The primary structure comprises 587 residues: ATP-dependent lipid A-core flippase (587 aa).

The next 5 membrane-spanning stretches (helical) occupy residues 31–51, 68–88, 145–165, 166–186, and 259–279; these read LIVSGVALVFNALADSGLIYL, LKMMAFVVVGMIILRGITNFI, GSLITIVREGAYIISLFAVMF, YTSWELTIVLFIIGPIIAVLI, and VQVIASLALATVLYLATTPLI. The region spanning 32–315 is the ABC transmembrane type-1 domain; the sequence is IVSGVALVFN…LTAVNAQFQS (284 aa). The 237-residue stretch at 347–583 folds into the ABC transporter domain; sequence LEFKNVSFAY…NGAYKQLHSM (237 aa). Position 381-388 (381-388) interacts with ATP; sequence GRSGSGKS.

It belongs to the ABC transporter superfamily. Lipid exporter (TC 3.A.1.106) family. Homodimer.

Its subcellular location is the cell inner membrane. It catalyses the reaction ATP + H2O + lipid A-core oligosaccharideSide 1 = ADP + phosphate + lipid A-core oligosaccharideSide 2.. In terms of biological role, involved in lipopolysaccharide (LPS) biosynthesis. Translocates lipid A-core from the inner to the outer leaflet of the inner membrane. Transmembrane domains (TMD) form a pore in the inner membrane and the ATP-binding domain (NBD) is responsible for energy generation. The chain is ATP-dependent lipid A-core flippase from Haemophilus influenzae (strain ATCC 51907 / DSM 11121 / KW20 / Rd).